The primary structure comprises 379 residues: tRNA-specific 2-thiouridylase MnmA (379 aa).

Residues 9-16 (AMSGGVDS) and methionine 35 contribute to the ATP site. The interaction with target base in tRNA stretch occupies residues 94 to 96 (NPD). Cysteine 99 serves as the catalytic Nucleophile. Residues cysteine 99 and cysteine 195 are joined by a disulfide bond. Glycine 123 serves as a coordination point for ATP. Positions 145 to 147 (KDQ) are interaction with tRNA. Residue cysteine 195 is the Cysteine persulfide intermediate of the active site. An interaction with tRNA region spans residues 307–308 (RY).

Belongs to the MnmA/TRMU family.

The protein localises to the cytoplasm. The catalysed reaction is S-sulfanyl-L-cysteinyl-[protein] + uridine(34) in tRNA + AH2 + ATP = 2-thiouridine(34) in tRNA + L-cysteinyl-[protein] + A + AMP + diphosphate + H(+). Its function is as follows. Catalyzes the 2-thiolation of uridine at the wobble position (U34) of tRNA, leading to the formation of s(2)U34. The chain is tRNA-specific 2-thiouridylase MnmA from Xylella fastidiosa (strain M23).